The following is a 175-amino-acid chain: Probable DNA-directed RNA polymerase subunit delta (175 aa).

In terms of domain architecture, HTH HARE-type spans 14 to 81; it reads CSMIEVVHSV…GENRWGLRSW (68 aa). A disordered region spans residues 91 to 175; sequence ILPQPKPKKK…DETEEEEEEL (85 aa). Residues 106–175 show a composition bias toward acidic residues; sequence DGFDDYIEED…DETEEEEEEL (70 aa).

It belongs to the RpoE family. In terms of assembly, RNAP is composed of a core of 2 alpha, a beta and a beta' subunits. The core is associated with a delta subunit and one of several sigma factors.

Participates in both the initiation and recycling phases of transcription. In the presence of the delta subunit, RNAP displays an increased specificity of transcription, a decreased affinity for nucleic acids, and an increased efficiency of RNA synthesis because of enhanced recycling. This Bacillus anthracis protein is Probable DNA-directed RNA polymerase subunit delta.